The chain runs to 799 residues: MMHELDLRPHLARFAQRPLALLAWALLQGTSVNAQVAQVAPDEPPLPLKTSPLLQEQVAPALRSSLPTFISAEHIFGRPDLETVLEGRAELRRGDLVIKADRLEYDQPSDLATASGNVLINRAGNVYEGPLLELKLDTFEGFFNQPRYYFLKNDAHGQADRVDFIDDQRAVIHNATFTTCRRLPGPSWLPDWILRAASISLDNEEDVGTAKGALLSFKGVPLLPIPYLSFPLSDKRKSGVLPPILGLDNVNGAEVSVPYYWNIAPNRDATFTPTLMSKRGVNLSSELRYLEADYAGQVQLDLMPSDQLRDSTRWGLTYTHQATLQNSWTRPFTAGGVALNLNLNRVSDDNYWRDFTRASTGSLTQRLLTNDASLSWTEGNFSNTVRTLKWQTLQDVSAPITPPYDRLPQLATRYARSNVGGFDYSVDADYTRFQSERSLTLQPNAQRVFSVLQLSRPWVTAAGFITPKLQLNVSNYQFDTPLSNGARAASRVVPTLSVDSGLVFERDARYFGMNFRQTLEPRAFYVNTPFRDQRLLPNYDSGAVDFNFATIYTDNAFVGNDRISDSDLLTLGVSTRLLDPATGAQVARFGVAQRLRFRDQNVTLLPTDAPVTDRISDLLLGAAVNWDPKWAFDSTVQFNPTTKQSVRSTIGARYSAGHYRTVSAAYRYQRESSEQLDIGWQWPINDLWGERGQELGAGRGQGEGRWYSVGRLNYSMQERKLVDAVLGFEYDAGCWLGRIVLEQLQTSTASANQRIMFQLEFVGLTRLGVNPLKSLKDNIPGYQYLREQTSPPSRFSNYD.

Positions Met-1–Ala-34 are cleaved as a signal peptide.

Belongs to the LptD family. In terms of assembly, component of the lipopolysaccharide transport and assembly complex. Interacts with LptE and LptA.

It localises to the cell outer membrane. Functionally, together with LptE, is involved in the assembly of lipopolysaccharide (LPS) at the surface of the outer membrane. This is LPS-assembly protein LptD from Albidiferax ferrireducens (strain ATCC BAA-621 / DSM 15236 / T118) (Rhodoferax ferrireducens).